The primary structure comprises 200 residues: ATP synthase subunit delta', mitochondrial (200 aa).

A mitochondrion-targeting transit peptide spans 1 to 21; the sequence is MFRHSSRLLARATTMGWRRPF.

The protein belongs to the ATPase epsilon chain family. In terms of assembly, F-type ATPases have 2 components, CF(1) - the catalytic core - and CF(0) - the membrane proton channel. CF(1) has five subunits: alpha(3), beta(3), gamma(1), delta(1), epsilon(1). CF(0) has three main subunits: a, b and c.

It localises to the mitochondrion. Its subcellular location is the mitochondrion inner membrane. Its function is as follows. Mitochondrial membrane ATP synthase (F(1)F(0) ATP synthase or Complex V) produces ATP from ADP in the presence of a proton gradient across the membrane which is generated by electron transport complexes of the respiratory chain. F-type ATPases consist of two structural domains, F(1) - containing the extramembraneous catalytic core, and F(0) - containing the membrane proton channel, linked together by a central stalk and a peripheral stalk. During catalysis, ATP turnover in the catalytic domain of F(1) is coupled via a rotary mechanism of the central stalk subunits to proton translocation. Part of the complex F(1) domain and of the central stalk which is part of the complex rotary element. Rotation of the central stalk against the surrounding alpha(3)beta(3) subunits leads to hydrolysis of ATP in three separate catalytic sites on the beta subunits. The sequence is that of ATP synthase subunit delta', mitochondrial from Ipomoea batatas (Sweet potato).